We begin with the raw amino-acid sequence, 356 residues long: DNA polymerase IV (356 aa).

The UmuC domain occupies 7–188 (IIHIDMDCFY…LPLKKIPRVG (182 aa)). Asp11 and Asp106 together coordinate Mg(2+). The active site involves Glu107.

Belongs to the DNA polymerase type-Y family. As to quaternary structure, monomer. Mg(2+) is required as a cofactor.

It is found in the cytoplasm. The enzyme catalyses DNA(n) + a 2'-deoxyribonucleoside 5'-triphosphate = DNA(n+1) + diphosphate. Its function is as follows. Poorly processive, error-prone DNA polymerase involved in untargeted mutagenesis. Copies undamaged DNA at stalled replication forks, which arise in vivo from mismatched or misaligned primer ends. These misaligned primers can be extended by PolIV. Exhibits no 3'-5' exonuclease (proofreading) activity. May be involved in translesional synthesis, in conjunction with the beta clamp from PolIII. The sequence is that of DNA polymerase IV from Actinobacillus pleuropneumoniae serotype 5b (strain L20).